We begin with the raw amino-acid sequence, 229 residues long: Ras-related protein Rab-33B (229 aa).

GTP-binding residues include Asn43, Val44, Gly45, Lys46, Thr47, Cys48, Thr62, and Thr65. A Mg(2+)-binding site is contributed by Thr47. A Switch 1 motif is present at residues 56–68 (GRFPDRTEATIGV). Residues Thr65 and Asp88 each coordinate Mg(2+). A Switch 2 motif is present at residues 89–108 (TAGQERFRKSMVQHYYRNVH). GTP is bound by residues Gly91, Asn148, Lys149, Asp151, Ala179, and Lys180. Residues Cys227 and Cys229 are each lipidated (S-geranylgeranyl cysteine). Cys229 carries the cysteine methyl ester modification.

It belongs to the small GTPase superfamily. Rab family. Interacts (GTP- and GDP-bound forms) with ATG16L1; the complex consists of a tetramer where two RAB33B molecules bind independently one molecule of the ATG16L1 homodimer; the interaction promotes ATG12-ATG5-ATG16L1 complex recruitment to phagophores. Interacts with ATG16L2; however interaction is approximately hundred times lower than for ATG16L1. Interacts with RIC1 (via C-terminus domain); the interaction is direct with a preference for RAB33B-GTP. Interacts with RGP1. Requires Mg(2+) as cofactor. Post-translationally, prenylated.

Its subcellular location is the golgi apparatus membrane. The protein localises to the golgi apparatus. It localises to the cis-Golgi network. It is found in the preautophagosomal structure membrane. It catalyses the reaction GTP + H2O = GDP + phosphate + H(+). Its activity is regulated as follows. Regulated by guanine nucleotide exchange factors (GEFs) which promote the exchange of bound GDP for free GTP. Regulated by GTPase activating proteins (GAPs) such as SGSM2 which increase the GTP hydrolysis activity. Inhibited by GDP dissociation inhibitors (GDIs). In terms of biological role, the small GTPases Rab are key regulators of intracellular membrane trafficking, from the formation of transport vesicles to their fusion with membranes. Rabs cycle between an inactive GDP-bound form and an active GTP-bound form that is able to recruit to membranes different sets of downstream effectors directly responsible for vesicle formation, movement, tethering and fusion. RAB33B acts, in coordination with RAB6A, to regulate intra-Golgi retrograde trafficking. Participates in autophagosome formation by recruiting the ATG12-ATG5-ATG16L1 complex to phagophores, probably in a nucleotide-independent manner. The polypeptide is Ras-related protein Rab-33B (Homo sapiens (Human)).